The primary structure comprises 235 residues: Proteasome subunit beta type-1 (235 aa).

Residues 1–20 (MSRLGFEQFPDYQVPGMKHP) constitute a propeptide that is removed on maturation.

This sequence belongs to the peptidase T1B family. The 26S proteasome consists of a 20S proteasome core and two 19S regulatory subunits. The 20S proteasome core is composed of 28 subunits that are arranged in four stacked rings, resulting in a barrel-shaped structure. The two end rings are each formed by seven alpha subunits, and the two central rings are each formed by seven beta subunits. The catalytic chamber with the active sites is on the inside of the barrel.

It is found in the cytoplasm. The protein localises to the nucleus. In terms of biological role, non-catalytic component of the proteasome, a multicatalytic proteinase complex which is characterized by its ability to cleave peptides with Arg, Phe, Tyr, Leu, and Glu adjacent to the leaving group at neutral or slightly basic pH. The proteasome has an ATP-dependent proteolytic activity. In Drosophila melanogaster (Fruit fly), this protein is Proteasome subunit beta type-1 (Prosbeta6).